A 291-amino-acid chain; its full sequence is Phosphatidylglycerol--prolipoprotein diacylglyceryl transferase (291 aa).

7 consecutive transmembrane segments (helical) span residues 21–41 (VALH…MWLA), 60–80 (LLYA…VLFY), 96–116 (WDGG…MIIF), 130–150 (FIAP…FING), 198–218 (SQLY…NLFI), 225–245 (GAVS…VEFF), and 260–280 (ISMG…MMVW). Residue R143 coordinates a 1,2-diacyl-sn-glycero-3-phospho-(1'-sn-glycerol).

It belongs to the Lgt family.

The protein resides in the cell inner membrane. The enzyme catalyses L-cysteinyl-[prolipoprotein] + a 1,2-diacyl-sn-glycero-3-phospho-(1'-sn-glycerol) = an S-1,2-diacyl-sn-glyceryl-L-cysteinyl-[prolipoprotein] + sn-glycerol 1-phosphate + H(+). Its pathway is protein modification; lipoprotein biosynthesis (diacylglyceryl transfer). In terms of biological role, catalyzes the transfer of the diacylglyceryl group from phosphatidylglycerol to the sulfhydryl group of the N-terminal cysteine of a prolipoprotein, the first step in the formation of mature lipoproteins. This is Phosphatidylglycerol--prolipoprotein diacylglyceryl transferase from Salmonella newport (strain SL254).